Consider the following 245-residue polypeptide: MIIPAIDLIDGQVVRLYQGDYDKQTTFDLSPLAQLQSYQAQGAKLLHIVDLTGAKDPNKRQTKLIAELAAGLDVDIQVGGGIRSEDQVAELLAIGVKRVVIGSLAVKEPELVKSWFVKYGSDAICLALDVNINDNGDKIVAVSGWQSGGGKSLESLVAEFETVGLKHALVTDISRDGTLTGANTELYTELAATYPNILWQASGGIATLDNVAAVRDSKASGIIIGKALLINQFTVEEAIQCWPNA.

Residue D7 is the Proton acceptor of the active site. D129 acts as the Proton donor in catalysis.

This sequence belongs to the HisA/HisF family.

The protein localises to the cytoplasm. It catalyses the reaction 1-(5-phospho-beta-D-ribosyl)-5-[(5-phospho-beta-D-ribosylamino)methylideneamino]imidazole-4-carboxamide = 5-[(5-phospho-1-deoxy-D-ribulos-1-ylimino)methylamino]-1-(5-phospho-beta-D-ribosyl)imidazole-4-carboxamide. It participates in amino-acid biosynthesis; L-histidine biosynthesis; L-histidine from 5-phospho-alpha-D-ribose 1-diphosphate: step 4/9. The polypeptide is 1-(5-phosphoribosyl)-5-[(5-phosphoribosylamino)methylideneamino] imidazole-4-carboxamide isomerase (Shewanella frigidimarina (strain NCIMB 400)).